A 928-amino-acid chain; its full sequence is Arf guanine nucleotide exchange factor sec74 (928 aa).

2 stretches are compositionally biased toward polar residues: residues 1-12 and 57-83; these read MDESSRIASSSA and TITSDTPKVSSQHSPVSSAYTGDSTTD. 2 disordered regions span residues 1–152 and 227–249; these read MDES…RPSS and SLSSNFSARTPASNQSSVSEDFG. A Phosphoserine modification is found at Ser-67. Composition is skewed to low complexity over residues 89–102 and 115–132; these read GHSSSQKLSNKVSS and SKSSSSQCSSPFLPTSSS. The SEC7 domain occupies 228–420; sequence LSSNFSARTP…ECFYDNITYT (193 aa). Over residues 234-245 the composition is skewed to polar residues; the sequence is ARTPASNQSSVS. Residues 548–677 enclose the PH domain; it reads KVFKLGILIQ…WLVKINFVST (130 aa).

The protein localises to the cytoplasm. Its subcellular location is the cell tip. Functionally, guanine nucleotide exchange factor for Arf GTPases, stimulating the nucleotide exchange from the GDP-bound to the GTP-bound form. Involved in vesicular transport. This is Arf guanine nucleotide exchange factor sec74 (sec74) from Schizosaccharomyces pombe (strain 972 / ATCC 24843) (Fission yeast).